Consider the following 64-residue polypeptide: Cytotoxin homolog S4C8 (64 aa).

4 disulfides stabilise this stretch: Cys-3–Cys-22, Cys-15–Cys-40, Cys-44–Cys-56, and Cys-57–Cys-62.

The protein belongs to the three-finger toxin family. Short-chain subfamily. Orphan group XIII sub-subfamily. Expressed by the venom gland.

The protein resides in the secreted. In Aspidelaps scutatus (Shield-nose snake), this protein is Cytotoxin homolog S4C8.